The sequence spans 601 residues: Sulfite reductase [NADPH] flavoprotein alpha-component (601 aa).

The Flavodoxin-like domain occupies 64 to 202 (ITLISASQTG…AAQEWRARVV (139 aa)). Residues 70–75 (SQTGNA), 117–120 (STQG), and 153–162 (LGDTSYEFFC) contribute to the FMN site. The 215-residue stretch at 236-450 (EAPLSASLAV…IEHNDNFRLP (215 aa)) folds into the FAD-binding FR-type domain. FAD contacts are provided by residues threonine 324, alanine 358, 388 to 391 (RLYS), 406 to 408 (TVG), tyrosine 412, and 421 to 424 (GGAS). Residues 521-522 (SR), 527-531 (KIYVQ), and aspartate 563 contribute to the NADP(+) site. Tyrosine 601 lines the FAD pocket.

The protein belongs to the NADPH-dependent sulphite reductase flavoprotein subunit CysJ family. This sequence in the N-terminal section; belongs to the flavodoxin family. In the C-terminal section; belongs to the flavoprotein pyridine nucleotide cytochrome reductase family. Alpha(8)-beta(8). The alpha component is a flavoprotein, the beta component is a hemoprotein. Requires FAD as cofactor. FMN serves as cofactor.

The catalysed reaction is hydrogen sulfide + 3 NADP(+) + 3 H2O = sulfite + 3 NADPH + 4 H(+). It functions in the pathway sulfur metabolism; hydrogen sulfide biosynthesis; hydrogen sulfide from sulfite (NADPH route): step 1/1. In terms of biological role, component of the sulfite reductase complex that catalyzes the 6-electron reduction of sulfite to sulfide. This is one of several activities required for the biosynthesis of L-cysteine from sulfate. The flavoprotein component catalyzes the electron flow from NADPH -&gt; FAD -&gt; FMN to the hemoprotein component. In Citrobacter koseri (strain ATCC BAA-895 / CDC 4225-83 / SGSC4696), this protein is Sulfite reductase [NADPH] flavoprotein alpha-component.